Reading from the N-terminus, the 217-residue chain is Large ribosomal subunit protein uL4 (217 aa).

The disordered stretch occupies residues 58-90 (TAATKGRSDVSGGGKKPWRQKGTGRARSGTSRS).

This sequence belongs to the universal ribosomal protein uL4 family. In terms of assembly, part of the 50S ribosomal subunit.

One of the primary rRNA binding proteins, this protein initially binds near the 5'-end of the 23S rRNA. It is important during the early stages of 50S assembly. It makes multiple contacts with different domains of the 23S rRNA in the assembled 50S subunit and ribosome. Its function is as follows. Forms part of the polypeptide exit tunnel. This chain is Large ribosomal subunit protein uL4, found in Syntrophus aciditrophicus (strain SB).